Reading from the N-terminus, the 983-residue chain is UPF0182 protein KRH_08700 (983 aa).

Transmembrane regions (helical) follow at residues 22–42 (GALL…VGFT), 67–87 (VIGL…LSLW), 116–136 (VVMV…VATQ), 172–192 (LLIG…LLMH), 213–233 (VHLG…FWLD), 261–281 (GILA…GFIG), and 288–308 (IGAA…PWAI). Residues 893-959 (GAKTDTGAGV…DKAMKDGDWT (67 aa)) form a disordered region. Residues 947–959 (QDSDKAMKDGDWT) show a composition bias toward basic and acidic residues.

This sequence belongs to the UPF0182 family.

The protein resides in the cell membrane. The sequence is that of UPF0182 protein KRH_08700 from Kocuria rhizophila (strain ATCC 9341 / DSM 348 / NBRC 103217 / DC2201).